A 327-amino-acid polypeptide reads, in one-letter code: GMP reductase (327 aa).

Cys-175 serves as the catalytic Thioimidate intermediate. 204 to 227 (IIADGGIRTPGDIAKSIRFGATMV) lines the NADP(+) pocket.

Belongs to the IMPDH/GMPR family. GuaC type 2 subfamily.

It carries out the reaction IMP + NH4(+) + NADP(+) = GMP + NADPH + 2 H(+). In terms of biological role, catalyzes the irreversible NADPH-dependent deamination of GMP to IMP. It functions in the conversion of nucleobase, nucleoside and nucleotide derivatives of G to A nucleotides, and in maintaining the intracellular balance of A and G nucleotides. The protein is GMP reductase of Clostridium acetobutylicum (strain ATCC 824 / DSM 792 / JCM 1419 / IAM 19013 / LMG 5710 / NBRC 13948 / NRRL B-527 / VKM B-1787 / 2291 / W).